The following is a 285-amino-acid chain: 2,3,4,5-tetrahydropyridine-2,6-dicarboxylate N-succinyltransferase (285 aa).

Residues arginine 111 and aspartate 148 each coordinate substrate.

It belongs to the transferase hexapeptide repeat family. As to quaternary structure, homotrimer.

The protein localises to the cytoplasm. The catalysed reaction is (S)-2,3,4,5-tetrahydrodipicolinate + succinyl-CoA + H2O = (S)-2-succinylamino-6-oxoheptanedioate + CoA. Its pathway is amino-acid biosynthesis; L-lysine biosynthesis via DAP pathway; LL-2,6-diaminopimelate from (S)-tetrahydrodipicolinate (succinylase route): step 1/3. The protein is 2,3,4,5-tetrahydropyridine-2,6-dicarboxylate N-succinyltransferase of Sinorhizobium medicae (strain WSM419) (Ensifer medicae).